We begin with the raw amino-acid sequence, 194 residues long: Endonuclease V (194 aa).

The Mg(2+) site is built by aspartate 31 and glutamate 95.

Belongs to the endonuclease V family. It depends on Mg(2+) as a cofactor.

Its subcellular location is the cytoplasm. The catalysed reaction is Endonucleolytic cleavage at apurinic or apyrimidinic sites to products with a 5'-phosphate.. Functionally, DNA repair enzyme involved in the repair of deaminated bases. Selectively cleaves double-stranded DNA at the second phosphodiester bond 3' to a deoxyinosine leaving behind the intact lesion on the nicked DNA. This chain is Endonuclease V, found in Pyrococcus abyssi (strain GE5 / Orsay).